The following is a 110-amino-acid chain: Phosphoribosyl-ATP pyrophosphatase (110 aa).

Belongs to the PRA-PH family.

The protein resides in the cytoplasm. It carries out the reaction 1-(5-phospho-beta-D-ribosyl)-ATP + H2O = 1-(5-phospho-beta-D-ribosyl)-5'-AMP + diphosphate + H(+). It participates in amino-acid biosynthesis; L-histidine biosynthesis; L-histidine from 5-phospho-alpha-D-ribose 1-diphosphate: step 2/9. The polypeptide is Phosphoribosyl-ATP pyrophosphatase (hisE) (Clostridium acetobutylicum (strain ATCC 824 / DSM 792 / JCM 1419 / IAM 19013 / LMG 5710 / NBRC 13948 / NRRL B-527 / VKM B-1787 / 2291 / W)).